The chain runs to 258 residues: tRNA pseudouridine synthase A (258 aa).

Asp55 functions as the Nucleophile in the catalytic mechanism. Tyr113 is a binding site for substrate.

It belongs to the tRNA pseudouridine synthase TruA family. Homodimer.

It carries out the reaction uridine(38/39/40) in tRNA = pseudouridine(38/39/40) in tRNA. Functionally, formation of pseudouridine at positions 38, 39 and 40 in the anticodon stem and loop of transfer RNAs. The sequence is that of tRNA pseudouridine synthase A from Limosilactobacillus fermentum (strain NBRC 3956 / LMG 18251) (Lactobacillus fermentum).